Reading from the N-terminus, the 409-residue chain is 1-deoxy-D-xylulose 5-phosphate reductoisomerase (409 aa).

Residues threonine 10, glycine 11, serine 12, isoleucine 13, glycine 36, arginine 37, asparagine 38, and asparagine 126 each contribute to the NADPH site. Lysine 127 serves as a coordination point for 1-deoxy-D-xylulose 5-phosphate. Residue glutamate 128 participates in NADPH binding. Residue aspartate 152 participates in Mn(2+) binding. Residues serine 153, glutamate 154, serine 190, and histidine 213 each contribute to the 1-deoxy-D-xylulose 5-phosphate site. Glutamate 154 serves as a coordination point for Mn(2+). Glycine 219 is a binding site for NADPH. Residues serine 226, asparagine 231, lysine 232, and glutamate 235 each coordinate 1-deoxy-D-xylulose 5-phosphate. Glutamate 235 is a binding site for Mn(2+).

The protein belongs to the DXR family. It depends on Mg(2+) as a cofactor. Requires Mn(2+) as cofactor.

It carries out the reaction 2-C-methyl-D-erythritol 4-phosphate + NADP(+) = 1-deoxy-D-xylulose 5-phosphate + NADPH + H(+). Its pathway is isoprenoid biosynthesis; isopentenyl diphosphate biosynthesis via DXP pathway; isopentenyl diphosphate from 1-deoxy-D-xylulose 5-phosphate: step 1/6. Functionally, catalyzes the NADPH-dependent rearrangement and reduction of 1-deoxy-D-xylulose-5-phosphate (DXP) to 2-C-methyl-D-erythritol 4-phosphate (MEP). This Prochlorococcus marinus (strain MIT 9515) protein is 1-deoxy-D-xylulose 5-phosphate reductoisomerase.